A 1070-amino-acid chain; its full sequence is DNA-directed RNA polymerase subunit beta (1070 aa).

The protein belongs to the RNA polymerase beta chain family. As to quaternary structure, in plastids the minimal PEP RNA polymerase catalytic core is composed of four subunits: alpha, beta, beta', and beta''. When a (nuclear-encoded) sigma factor is associated with the core the holoenzyme is formed, which can initiate transcription.

It localises to the plastid. It is found in the chloroplast. It catalyses the reaction RNA(n) + a ribonucleoside 5'-triphosphate = RNA(n+1) + diphosphate. In terms of biological role, DNA-dependent RNA polymerase catalyzes the transcription of DNA into RNA using the four ribonucleoside triphosphates as substrates. The sequence is that of DNA-directed RNA polymerase subunit beta from Dioscorea elephantipes (Elephant's foot yam).